We begin with the raw amino-acid sequence, 124 residues long: UPF0382 membrane protein HI_1073 (124 aa).

A run of 3 helical transmembrane segments spans residues 6 to 26 (LTLV…AAHG), 70 to 90 (SMSS…ALAF), and 95 to 115 (VIVW…ISLA).

This sequence belongs to the UPF0382 family.

It is found in the cell membrane. This is UPF0382 membrane protein HI_1073 from Haemophilus influenzae (strain ATCC 51907 / DSM 11121 / KW20 / Rd).